The chain runs to 716 residues: MIYQSPTIQVELTADKIARLCFNAPGSVNKFDRETLASLNAALDVLKDSDAKAAVLTSGKDTFIVGADITEFLALFAEEDAKLMEWIAQANVVFNKLEDLPFPTVSAIKGFALGGGCEAILATDFRVADTSAKIGLPETKLGLIPGFGGTVRLPRLIGADNALEWITTGKDQRPEDALKVGAIDAVVAPENLEAAAIQMLNDALAGKLDWQARRARKQAPLTLPKLEAMMSFTTAKGMVYAVAGKHYPAPMAAVSVVEQAAGMSRAEALVVEHNAFIKLAKTDVATALIGIFLNDQLVKGKAKKASKLAKDIKHAAVLGAGIMGGGIAYQSASKGTPIVMKDINQAALDLGVNEAAKLLSAQVARGRSTPDKMAKVLNNITPALDYAPLKDVNVVVEAVVENPKVKAMVLADVENVVADDAIIASNTSTISIDLLAKSLKNPARFCGMHFFNPVHKMPLVEVIRGKDTSEETVASVVAYASKMGKTPIVVNDCPGFFVNRVLFPYFAGFNGLLADGGDFAAIDKVMEKQFGWPMGPAYLLDVVGLDTGHHAQAVMADGFPDRMGKSDKDAIDVMYEAGRLGQKNGKGFYQYSIDKRGKPKKDVDPASYTMLAEAFGAQKAFEADEIIARTMIPMIIETVRCLEEGIVASPAEADMGLVYGLGFPPFRGGVFRYLDTMGVANFVALADKYAHLGGLYQVTDAMRELASNNGSYYPKA.

The enoyl-CoA hydratase/isomerase stretch occupies residues 1 to 188; that stretch reads MIYQSPTIQV…KVGAIDAVVA (188 aa). Aspartate 295 provides a ligand contact to substrate. Residues 310–716 form a 3-hydroxyacyl-CoA dehydrogenase region; that stretch reads KDIKHAAVLG…SNNGSYYPKA (407 aa). NAD(+) contacts are provided by residues methionine 323, aspartate 342, 399 to 401, lysine 406, and serine 428; that span reads VVE. The For 3-hydroxyacyl-CoA dehydrogenase activity role is filled by histidine 449. Asparagine 452 provides a ligand contact to NAD(+). Positions 499 and 659 each coordinate substrate.

This sequence in the N-terminal section; belongs to the enoyl-CoA hydratase/isomerase family. The protein in the C-terminal section; belongs to the 3-hydroxyacyl-CoA dehydrogenase family. Heterotetramer of two alpha chains (FadB) and two beta chains (FadA).

It catalyses the reaction a (3S)-3-hydroxyacyl-CoA + NAD(+) = a 3-oxoacyl-CoA + NADH + H(+). The catalysed reaction is a (3S)-3-hydroxyacyl-CoA = a (2E)-enoyl-CoA + H2O. The enzyme catalyses a 4-saturated-(3S)-3-hydroxyacyl-CoA = a (3E)-enoyl-CoA + H2O. It carries out the reaction (3S)-3-hydroxybutanoyl-CoA = (3R)-3-hydroxybutanoyl-CoA. It catalyses the reaction a (3Z)-enoyl-CoA = a 4-saturated (2E)-enoyl-CoA. The catalysed reaction is a (3E)-enoyl-CoA = a 4-saturated (2E)-enoyl-CoA. Its pathway is lipid metabolism; fatty acid beta-oxidation. Its function is as follows. Involved in the aerobic and anaerobic degradation of long-chain fatty acids via beta-oxidation cycle. Catalyzes the formation of 3-oxoacyl-CoA from enoyl-CoA via L-3-hydroxyacyl-CoA. It can also use D-3-hydroxyacyl-CoA and cis-3-enoyl-CoA as substrate. This is Fatty acid oxidation complex subunit alpha from Shewanella amazonensis (strain ATCC BAA-1098 / SB2B).